Here is a 765-residue protein sequence, read N- to C-terminus: MTVSPTSAPTQAIDTVERAATTPDEPQPFGELGLKDDEYQRIREILGRRPTDTELAMYSVMWSEHCSYKSSKVHLRYFGETTTDEMRAGMLAGIGENAGVVDIGDGWAVTFKVESHNHPSYVEPYQGAATGVGGIVRDIMAMGARPVAVMDQLRFGAADAPDTRRVLDGVVRGIGGYGNSLGLPNIGGETVFDACYAGNPLVNAMCVGVLRQEDLHLAFASGAGNKIILFGARTGLDGIGGVSVLASDTFDAENSRKKLPSVQVGDPFMEKVLIECCLELYAGGLVIGIQDLGGAGLACATSELASAGDGGMEVRLEAVPLRTAGMTPAEVLCSESQERMCAVVTPENVDAFLAVCRKWDVLATVIGEVTDGDRLRITWHGQTVVDVPPRTVAHEGPVYQRPLARPDTQDALNADSSARLPRPATGAELRATLLALLGSPHLCSRAFITEQYDRYVRGNTVLAEHADGGVLRVDETTGRGIAVSTDASGRYTMLDPYAGAQLALAEAYRNVAVTGATPVAVTNCLNFGSPEDPAVMWQFAQAVRGLADGCVALGIPVTGGNVSFYNQTGSAAILPTPVVGVLGVLDDVSRRLPTALGAEPGETLMLLGETRDEFDGSVWAQVTADHLGGLPPKVDLAREKLLAEVLRAASRDGLVSAAHDLSEGGLAQAVVEAALAGETGCRIVLPEDADPFVTLFSESAGRVLVAVPRTEESRFRSMCEARGLPAVRIGVVDQASDEVEVQGLFTVSLAELRQTSESVLPRLFG.

Positions 1 to 13 are enriched in polar residues; the sequence is MTVSPTSAPTQAI. Residues 1–32 are disordered; it reads MTVSPTSAPTQAIDTVERAATTPDEPQPFGEL. The active site involves H65. The ATP site is built by Y68 and K112. E114 lines the Mg(2+) pocket. Substrate is bound by residues 115 to 118 and R137; that span reads SHNH. H116 acts as the Proton acceptor in catalysis. Mg(2+) is bound at residue D138. Residue Q263 participates in substrate binding. D291 is a Mg(2+) binding site. 335–337 lines the substrate pocket; the sequence is ESQ. Residues N523 and G560 each contribute to the ATP site. Mg(2+) is bound at residue N561. Position 563 (S563) interacts with substrate.

It belongs to the FGAMS family. In terms of assembly, monomer. Part of the FGAM synthase complex composed of 1 PurL, 1 PurQ and 2 PurS subunits.

The protein localises to the cytoplasm. The catalysed reaction is N(2)-formyl-N(1)-(5-phospho-beta-D-ribosyl)glycinamide + L-glutamine + ATP + H2O = 2-formamido-N(1)-(5-O-phospho-beta-D-ribosyl)acetamidine + L-glutamate + ADP + phosphate + H(+). It participates in purine metabolism; IMP biosynthesis via de novo pathway; 5-amino-1-(5-phospho-D-ribosyl)imidazole from N(2)-formyl-N(1)-(5-phospho-D-ribosyl)glycinamide: step 1/2. In terms of biological role, part of the phosphoribosylformylglycinamidine synthase complex involved in the purines biosynthetic pathway. Catalyzes the ATP-dependent conversion of formylglycinamide ribonucleotide (FGAR) and glutamine to yield formylglycinamidine ribonucleotide (FGAM) and glutamate. The FGAM synthase complex is composed of three subunits. PurQ produces an ammonia molecule by converting glutamine to glutamate. PurL transfers the ammonia molecule to FGAR to form FGAM in an ATP-dependent manner. PurS interacts with PurQ and PurL and is thought to assist in the transfer of the ammonia molecule from PurQ to PurL. The polypeptide is Phosphoribosylformylglycinamidine synthase subunit PurL (Mycobacterium avium (strain 104)).